Consider the following 94-residue polypeptide: Integration host factor subunit beta (94 aa).

The protein belongs to the bacterial histone-like protein family. In terms of assembly, heterodimer of an alpha and a beta chain.

In terms of biological role, this protein is one of the two subunits of integration host factor, a specific DNA-binding protein that functions in genetic recombination as well as in transcriptional and translational control. The polypeptide is Integration host factor subunit beta (Azorhizobium caulinodans (strain ATCC 43989 / DSM 5975 / JCM 20966 / LMG 6465 / NBRC 14845 / NCIMB 13405 / ORS 571)).